The sequence spans 389 residues: Cellobiose 2-epimerase (389 aa).

The protein belongs to the cellobiose 2-epimerase family.

It catalyses the reaction D-cellobiose = beta-D-glucosyl-(1-&gt;4)-D-mannopyranose. Functionally, catalyzes the reversible epimerization of cellobiose to 4-O-beta-D-glucopyranosyl-D-mannose (Glc-Man). The polypeptide is Cellobiose 2-epimerase (Ruminococcus albus (strain ATCC 27210 / DSM 20455 / JCM 14654 / NCDO 2250 / 7)).